The following is a 55-amino-acid chain: Large ribosomal subunit protein bL33 (55 aa).

It belongs to the bacterial ribosomal protein bL33 family.

In Vibrio atlanticus (strain LGP32) (Vibrio splendidus (strain Mel32)), this protein is Large ribosomal subunit protein bL33.